A 717-amino-acid chain; its full sequence is MAAAALLAAVDRNQLRRVPILLLQPREWAWKLRTMKYGTTPGGSITKVLIANRGEIACRVIRTAKKMGVQSVAVYSEADRNSMHVDMADEAYSIGPAPSQQSYLAMEKIIQVAKSSAAQAIHPGYGFLSENMEFAELCKQEGIIFIGPPSSAIRDMGIKSTSKSIMAAAGVPVVEGYHGKDQSDQCLREHAGKIGYPVMIKAVRGGGGKGMRIVRSEREFQEQLESARREAKKSFNDDAMLIEKFVDTPRHVEVQVFGDHHGNAVYLFERDCSVQRRHQKIIEEAPAPGINPEVRRKLGEAAVRAAKAVKYVGAGTVEFIMDSRHNFYFMEMNTRLQVEHPVTEMITGTDLVEWQLRIAAGEKIPLSQEEIPLQGHAFEARIYAEDPDNNFMPGAGPLVHLSTPSADMSTRIETGVRQGDEVSVHYDPMIAKLVVWASDRQSALSKLRYCLHQYNIVGLRSNVDFLLRLSGHPEFEAGNVHTDFIPQHHKDLLPSHSTIAKESVCQAALGLILKEKEMTSAFKLHTQDQFSPFSFSSGRRLNISYTRNMTLRSGKSDIVIAVTYNRDGSYDMQIDNKSFRVLGDLSSEDGCTYLKSSINGVARKSKFILLDNTVHLFSMEGSIEVGIPVPKYLSPVSAEGAQGGTIAPMTGTIEKVFVKAGDRVKAGDSLMVMIAMKMEHTIKAPKDGRIKKVFFSEGAQANRHAPLVEFEEEESDK.

The N-terminal 38 residues, 1–38 (MAAAALLAAVDRNQLRRVPILLLQPREWAWKLRTMKYG), are a transit peptide targeting the mitochondrion. Residues 45–490 (ITKVLIANRG…HTDFIPQHHK (446 aa)) form the Biotin carboxylation domain. Position 159 (Lys159) interacts with ATP. The ATP-grasp domain maps to 163–360 (KSIMAAAGVP…LVEWQLRIAA (198 aa)). N6-acetyllysine is present on residues Lys180 and Lys193. Residues Lys201 and 207 to 208 (GG) contribute to the ATP site. The residue at position 233 (Lys233) is an N6-acetyllysine. His251, His278, and Glu318 together coordinate ATP. The active site involves Arg335. Lys490 carries the N6-acetyllysine modification. Lys577 bears the N6-acetyllysine; alternate mark. Lys577 carries the N6-succinyllysine; alternate modification. In terms of domain architecture, Biotinyl-binding spans 622-711 (SIEVGIPVPK…NRHAPLVEFE (90 aa)). Lys677 is modified (N6-biotinyllysine).

As to quaternary structure, probably a dodecamer composed of six biotin-containing alpha subunits (MCCC1) and six beta (MCCC2) subunits. Interacts (via the biotin carboxylation domain) with SIRT4. The cofactor is biotin. Post-translationally, acetylated.

The protein resides in the mitochondrion matrix. It carries out the reaction 3-methylbut-2-enoyl-CoA + hydrogencarbonate + ATP = 3-methyl-(2E)-glutaconyl-CoA + ADP + phosphate + H(+). Its pathway is amino-acid degradation; L-leucine degradation; (S)-3-hydroxy-3-methylglutaryl-CoA from 3-isovaleryl-CoA: step 2/3. In terms of biological role, biotin-attachment subunit of the 3-methylcrotonyl-CoA carboxylase, an enzyme that catalyzes the conversion of 3-methylcrotonyl-CoA to 3-methylglutaconyl-CoA, a critical step for leucine and isovaleric acid catabolism. This chain is Methylcrotonoyl-CoA carboxylase subunit alpha, mitochondrial (Mccc1), found in Mus musculus (Mouse).